A 509-amino-acid polypeptide reads, in one-letter code: Methylmalonyl-CoA decarboxylase subunit alpha (509 aa).

The 257-residue stretch at 4 to 260 (VQEKIELLHE…NNMEDAPLVD (257 aa)) folds into the CoA carboxyltransferase N-terminal domain. The region spanning 267–503 (REDESLNSLL…SKRENRAPKK (237 aa)) is the CoA carboxyltransferase C-terminal domain.

The protein belongs to the AccD/PCCB family. The methylmalonyl-CoA decarboxylase is composed of five subunits: the carboxyltransferase alpha subunit (MmdA), the tunnel beta subunit (MmdB), the biotin-containing gamma subunit (MmdC), and the delta (MmdD) and epsilon (MmdE) subunits. Interacts with the gamma subunit.

The protein localises to the cell membrane. The catalysed reaction is (S)-methylmalonyl-CoA + Na(+)(in) + H(+)(out) = propanoyl-CoA + Na(+)(out) + CO2. With respect to regulation, completely inhibited by avidin. Carboxyltransferase subunit of the sodium ion pump methylmalonyl-CoA decarboxylase, which converts the chemical energy of a decarboxylation reaction into an electrochemical gradient of Na(+) ions across the cytoplasmic membrane, thereby creating a sodium ion motive force that is used for ATP synthesis. The alpha subunit catalyzes the Na(+)-independent carboxyltransfer from methylmalonyl-CoA to the prosthetic biotin group located on the gamma subunit. Can also convert malonyl-CoA into acetyl-CoA. In Veillonella parvula (Staphylococcus parvulus), this protein is Methylmalonyl-CoA decarboxylase subunit alpha.